A 633-amino-acid chain; its full sequence is DEAD-box ATP-dependent RNA helicase 37 (633 aa).

The disordered stretch occupies residues 1–110 (MSASWADVAD…WNNRSGGWDR (110 aa)). Ser-2 carries the N-acetylserine modification. Polar residues predominate over residues 11-25 (SENTGSGSSNQNSHP). Composition is skewed to gly residues over residues 68-80 (GGSG…GGGY) and 87-101 (PGSG…GGGW). The short motif at 159–187 (NTFAEIDLGEALNLNIRRCKYVKPTPVQR) is the Q motif element. The Helicase ATP-binding domain maps to 190 to 374 (IPILLEGRDL…ADFLANYIFL (185 aa)). 203–210 (AQTGSGKT) is an ATP binding site. Residues 318-321 (DEAD) carry the DEAD box motif. The region spanning 401–552 (HLMDLLHAQR…EVPEWLTRYA (152 aa)) is the Helicase C-terminal domain. The tract at residues 555–600 (SSFGGGKNRRSGGRFGGRDFRREGSFGSGRGGYGGGGGGYGGGGGY) is disordered. The span at 580–600 (FGSGRGGYGGGGGGYGGGGGY) shows a compositional bias: gly residues.

The protein belongs to the DEAD box helicase family. DDX3/DED1 subfamily.

It carries out the reaction ATP + H2O = ADP + phosphate + H(+). The polypeptide is DEAD-box ATP-dependent RNA helicase 37 (RH37) (Arabidopsis thaliana (Mouse-ear cress)).